A 503-amino-acid polypeptide reads, in one-letter code: ATP synthase subunit alpha (503 aa).

170–177 (GDRQTGKT) lines the ATP pocket.

Belongs to the ATPase alpha/beta chains family. In terms of assembly, F-type ATPases have 2 components, CF(1) - the catalytic core - and CF(0) - the membrane proton channel. CF(1) has five subunits: alpha(3), beta(3), gamma(1), delta(1), epsilon(1). CF(0) has three main subunits: a(1), b(2) and c(9-12). The alpha and beta chains form an alternating ring which encloses part of the gamma chain. CF(1) is attached to CF(0) by a central stalk formed by the gamma and epsilon chains, while a peripheral stalk is formed by the delta and b chains.

It localises to the cell membrane. It catalyses the reaction ATP + H2O + 4 H(+)(in) = ADP + phosphate + 5 H(+)(out). Functionally, produces ATP from ADP in the presence of a proton gradient across the membrane. The alpha chain is a regulatory subunit. The protein is ATP synthase subunit alpha of Brevibacillus brevis (strain 47 / JCM 6285 / NBRC 100599).